A 328-amino-acid polypeptide reads, in one-letter code: D-cysteine desulfhydrase (328 aa).

N6-(pyridoxal phosphate)lysine is present on Lys-51.

Belongs to the ACC deaminase/D-cysteine desulfhydrase family. In terms of assembly, homodimer. Requires pyridoxal 5'-phosphate as cofactor.

It catalyses the reaction D-cysteine + H2O = hydrogen sulfide + pyruvate + NH4(+) + H(+). Catalyzes the alpha,beta-elimination reaction of D-cysteine and of several D-cysteine derivatives. It could be a defense mechanism against D-cysteine. The polypeptide is D-cysteine desulfhydrase (Escherichia coli (strain SMS-3-5 / SECEC)).